A 99-amino-acid polypeptide reads, in one-letter code: Large ribosomal subunit protein bL27 (99 aa).

A propeptide spanning residues 1–9 (MLIMNLQLF) is cleaved from the precursor.

This sequence belongs to the bacterial ribosomal protein bL27 family. In terms of processing, the N-terminus is cleaved by ribosomal processing cysteine protease Prp.

This is Large ribosomal subunit protein bL27 from Clostridium beijerinckii (strain ATCC 51743 / NCIMB 8052) (Clostridium acetobutylicum).